The chain runs to 600 residues: NADH-quinone oxidoreductase subunit C/D (600 aa).

An NADH dehydrogenase I subunit C region spans residues 1–190 (MVNNMTDLTA…DPFELTKAKQ (190 aa)). The tract at residues 214–600 (DFMFLNLGPN…IDFVMSDVDR (387 aa)) is NADH dehydrogenase I subunit D.

The protein in the N-terminal section; belongs to the complex I 30 kDa subunit family. This sequence in the C-terminal section; belongs to the complex I 49 kDa subunit family. As to quaternary structure, NDH-1 is composed of 13 different subunits. Subunits NuoB, CD, E, F, and G constitute the peripheral sector of the complex.

It localises to the cell inner membrane. The enzyme catalyses a quinone + NADH + 5 H(+)(in) = a quinol + NAD(+) + 4 H(+)(out). In terms of biological role, NDH-1 shuttles electrons from NADH, via FMN and iron-sulfur (Fe-S) centers, to quinones in the respiratory chain. The immediate electron acceptor for the enzyme in this species is believed to be ubiquinone. Couples the redox reaction to proton translocation (for every two electrons transferred, four hydrogen ions are translocated across the cytoplasmic membrane), and thus conserves the redox energy in a proton gradient. This is NADH-quinone oxidoreductase subunit C/D from Salmonella arizonae (strain ATCC BAA-731 / CDC346-86 / RSK2980).